Reading from the N-terminus, the 53-residue chain is Ovomucoid (53 aa).

The Kazal-like domain occupies 3-53 (VDCSEYPKPGCMMERLPLCGSDNKTYNDKCNFCNAVVESNGTLTLNHFGEC). Cystine bridges form between cysteine 5/cysteine 35, cysteine 13/cysteine 32, and cysteine 21/cysteine 53. Asparagine 42 carries an N-linked (GlcNAc...) asparagine glycan.

Its subcellular location is the secreted. This Turnix sylvaticus (Common buttonquail) protein is Ovomucoid.